A 173-amino-acid chain; its full sequence is Alpha-crystallin A chain (173 aa).

M1 bears the N-acetylmethionine mark. Residues 52–162 (LFRSVLESGI…SHSERPIPVS (111 aa)) form the sHSP domain. Residues H100, E102, H107, and H154 each contribute to the Zn(2+) site. A disordered region spans residues 142–173 (SGPKVPSNMDPSHSERPIPVSREEKPTSAPSS). Residues 153-167 (SHSERPIPVSREEKP) show a composition bias toward basic and acidic residues. S162 carries O-linked (GlcNAc) serine glycosylation.

The protein belongs to the small heat shock protein (HSP20) family. As to quaternary structure, heteropolymer composed of three CRYAA and one CRYAB subunits. Inter-subunit bridging via zinc ions enhances stability, which is crucial as there is no protein turn over in the lens. Can also form homodimers and homotetramers (dimers of dimers) which serve as the building blocks of homooligomers. Within homooligomers, the zinc-binding motif is created from residues of 3 different molecules. His-100 and Glu-102 from one molecule are ligands of the zinc ion, and His-107 and His-154 residues from additional molecules complete the site with tetrahedral coordination geometry.

It localises to the cytoplasm. It is found in the nucleus. Functionally, contributes to the transparency and refractive index of the lens. May act as a chaperone, preventing aggregation of various proteins under a wide range of stress conditions. The polypeptide is Alpha-crystallin A chain (CRYAA) (Gallus gallus (Chicken)).